A 513-amino-acid polypeptide reads, in one-letter code: Calcium-dependent protein kinase 2 (513 aa).

In terms of domain architecture, Protein kinase spans 65 to 323 (YSFGKELGRG…SAQVLQHQWL (259 aa)). ATP-binding positions include 71-79 (LGRGQFGVT) and K94. D189 (proton acceptor) is an active-site residue. The autoinhibitory domain stretch occupies residues 329 to 359 (ASDKPIDSAVLSRMKQFRAMNKLKKMALKVI). 4 EF-hand domains span residues 366–401 (EEIK…LGSK), 402–437 (LSEA…RHKL), 438–473 (ERDE…HEMG), and 478–508 (IREI…GMQQ). Residues D379, D381, S383, T385, E390, D415, D417, N419, S421, E426, D451, D453, S455, E462, D486, D488, D490, R492, and E497 each contribute to the Ca(2+) site.

Belongs to the protein kinase superfamily. Ser/Thr protein kinase family. CDPK subfamily.

It carries out the reaction L-seryl-[protein] + ATP = O-phospho-L-seryl-[protein] + ADP + H(+). The catalysed reaction is L-threonyl-[protein] + ATP = O-phospho-L-threonyl-[protein] + ADP + H(+). With respect to regulation, activated by calcium. Autophosphorylation may play an important role in the regulation of the kinase activity. Functionally, may play a role in signal transduction pathways that involve calcium as a second messenger. The chain is Calcium-dependent protein kinase 2 (CPK2) from Zea mays (Maize).